We begin with the raw amino-acid sequence, 302 residues long: Diacetylchitobiose uptake system permease protein NgcG (302 aa).

The next 6 helical transmembrane spans lie at 40–60, 99–119, 131–151, 166–186, 221–241, and 268–288; these read LLILWSVIVIVPMLWVLMSSF, VIVVVSALILVMLLGAMCAYV, IYYVMLAGLTFPVFLAIVPLF, LILTYVAFALPFTMFFLYSFF, AAVAIFNFLGLWNQFLLPVAL, and GALFAAIVVTVVPVLLVYCVF. The ABC transmembrane type-1 domain maps to 95 to 288; that stretch reads FLNSVIVVVS…VPVLLVYCVF (194 aa).

Belongs to the binding-protein-dependent transport system permease family. The complex is composed of two ATP-binding proteins (MsiK), two transmembrane proteins (NgcF and NgcG) and a solute-binding protein (NgcE).

The protein resides in the cell membrane. In terms of biological role, part of the ABC transporter complex NgcEFG-MsiK involved in N,N'-diacetylchitobiose ((GlcNAc)2) uptake. Responsible for the translocation of the substrate across the membrane. This chain is Diacetylchitobiose uptake system permease protein NgcG, found in Streptomyces coelicolor (strain ATCC BAA-471 / A3(2) / M145).